The sequence spans 161 residues: Transcription elongation factor GreA (161 aa).

A coiled-coil region spans residues 43–68 (SENAEYEAAREKQAFVEARIKHLEDI).

Belongs to the GreA/GreB family.

Its function is as follows. Necessary for efficient RNA polymerase transcription elongation past template-encoded arresting sites. The arresting sites in DNA have the property of trapping a certain fraction of elongating RNA polymerases that pass through, resulting in locked ternary complexes. Cleavage of the nascent transcript by cleavage factors such as GreA or GreB allows the resumption of elongation from the new 3'terminus. GreA releases sequences of 2 to 3 nucleotides. This is Transcription elongation factor GreA from Rickettsia bellii (strain OSU 85-389).